Consider the following 298-residue polypeptide: Probable alpha-L-glutamate ligase (298 aa).

The region spanning 104-287 is the ATP-grasp domain; the sequence is MQLLSRHGIG…VAGKIIEFLE (184 aa). ATP contacts are provided by residues K141, 178 to 179, D187, and 211 to 213; these read EY and RSN. D248, E260, and N262 together coordinate Mg(2+). Mn(2+)-binding residues include D248, E260, and N262.

The protein belongs to the RimK family. Requires Mg(2+) as cofactor. It depends on Mn(2+) as a cofactor.

In Aeromonas salmonicida (strain A449), this protein is Probable alpha-L-glutamate ligase.